The primary structure comprises 189 residues: Peptidyl-tRNA hydrolase (189 aa).

Tyrosine 15 serves as a coordination point for tRNA. Residue histidine 20 is the Proton acceptor of the active site. Residues phenylalanine 66, asparagine 68, and asparagine 114 each coordinate tRNA.

This sequence belongs to the PTH family. As to quaternary structure, monomer.

The protein localises to the cytoplasm. It carries out the reaction an N-acyl-L-alpha-aminoacyl-tRNA + H2O = an N-acyl-L-amino acid + a tRNA + H(+). Hydrolyzes ribosome-free peptidyl-tRNAs (with 1 or more amino acids incorporated), which drop off the ribosome during protein synthesis, or as a result of ribosome stalling. In terms of biological role, catalyzes the release of premature peptidyl moieties from peptidyl-tRNA molecules trapped in stalled 50S ribosomal subunits, and thus maintains levels of free tRNAs and 50S ribosomes. This is Peptidyl-tRNA hydrolase from Streptococcus pyogenes serotype M3 (strain ATCC BAA-595 / MGAS315).